Consider the following 137-residue polypeptide: Large ribosomal subunit protein uL16 (137 aa).

Belongs to the universal ribosomal protein uL16 family. In terms of assembly, part of the 50S ribosomal subunit.

Binds 23S rRNA and is also seen to make contacts with the A and possibly P site tRNAs. The protein is Large ribosomal subunit protein uL16 of Acinetobacter baumannii (strain AB307-0294).